The following is a 946-amino-acid chain: Probable outer membrane protein pmp18 (946 aa).

Positions 1 to 16 are cleaved as a signal peptide; the sequence is MQNNRSLSKSSFFVGA. Positions 668 to 946 constitute an Autotransporter domain; that stretch reads QGQIAPTASG…YLHAGTTFKF (279 aa).

It belongs to the PMP outer membrane protein family.

Its subcellular location is the secreted. It is found in the cell wall. The protein resides in the cell outer membrane. This is Probable outer membrane protein pmp18 (pmp18) from Chlamydia pneumoniae (Chlamydophila pneumoniae).